We begin with the raw amino-acid sequence, 367 residues long: Histidinol-phosphate aminotransferase (367 aa).

An N6-(pyridoxal phosphate)lysine modification is found at K230.

The protein belongs to the class-II pyridoxal-phosphate-dependent aminotransferase family. Histidinol-phosphate aminotransferase subfamily. Homodimer. It depends on pyridoxal 5'-phosphate as a cofactor.

The enzyme catalyses L-histidinol phosphate + 2-oxoglutarate = 3-(imidazol-4-yl)-2-oxopropyl phosphate + L-glutamate. It participates in amino-acid biosynthesis; L-histidine biosynthesis; L-histidine from 5-phospho-alpha-D-ribose 1-diphosphate: step 7/9. This Thermobifida fusca (strain YX) protein is Histidinol-phosphate aminotransferase.